A 156-amino-acid chain; its full sequence is Small ribosomal subunit protein uS7 (156 aa).

It belongs to the universal ribosomal protein uS7 family. As to quaternary structure, part of the 30S ribosomal subunit. Contacts proteins S9 and S11.

Functionally, one of the primary rRNA binding proteins, it binds directly to 16S rRNA where it nucleates assembly of the head domain of the 30S subunit. Is located at the subunit interface close to the decoding center, probably blocks exit of the E-site tRNA. The sequence is that of Small ribosomal subunit protein uS7 from Oceanobacillus iheyensis (strain DSM 14371 / CIP 107618 / JCM 11309 / KCTC 3954 / HTE831).